Reading from the N-terminus, the 432-residue chain is Adenylosuccinate synthetase (432 aa).

Residues 13–19 and 41–43 contribute to the GTP site; these read GDEGKGK and GHT. The active-site Proton acceptor is the D14. Mg(2+) is bound by residues D14 and G41. IMP is bound by residues 14 to 17, 39 to 42, T130, R144, Q225, T240, and R304; these read DEGK and NAGH. The Proton donor role is filled by H42. 300–306 contributes to the substrate binding site; that stretch reads STTGRRR. GTP contacts are provided by residues R306, 332–334, and 415–417; these read KID and STG.

This sequence belongs to the adenylosuccinate synthetase family. As to quaternary structure, homodimer. Mg(2+) serves as cofactor.

It localises to the cytoplasm. The enzyme catalyses IMP + L-aspartate + GTP = N(6)-(1,2-dicarboxyethyl)-AMP + GDP + phosphate + 2 H(+). The protein operates within purine metabolism; AMP biosynthesis via de novo pathway; AMP from IMP: step 1/2. Functionally, plays an important role in the de novo pathway of purine nucleotide biosynthesis. Catalyzes the first committed step in the biosynthesis of AMP from IMP. This is Adenylosuccinate synthetase from Blochmanniella pennsylvanica (strain BPEN).